The primary structure comprises 478 residues: RNA pseudouridine synthase 3, mitochondrial (478 aa).

Residues 1–20 (MWKAKTCFRQIYLTVLIRRY) constitute a mitochondrion transit peptide. Residues 92–162 (EEIYDKAIQT…MRISKRYDTI (71 aa)) form the S4 RNA-binding domain. Asp-232 is an active-site residue.

The protein belongs to the pseudouridine synthase RluA family.

It is found in the mitochondrion. It carries out the reaction a uridine in RNA = a pseudouridine in RNA. This is RNA pseudouridine synthase 3, mitochondrial from Arabidopsis thaliana (Mouse-ear cress).